The sequence spans 446 residues: UDP-N-acetylmuramoylalanine--D-glutamate ligase (446 aa).

An ATP-binding site is contributed by 115-121; that stretch reads GTNGKTT.

It belongs to the MurCDEF family.

The protein resides in the cytoplasm. The enzyme catalyses UDP-N-acetyl-alpha-D-muramoyl-L-alanine + D-glutamate + ATP = UDP-N-acetyl-alpha-D-muramoyl-L-alanyl-D-glutamate + ADP + phosphate + H(+). Its pathway is cell wall biogenesis; peptidoglycan biosynthesis. Functionally, cell wall formation. Catalyzes the addition of glutamate to the nucleotide precursor UDP-N-acetylmuramoyl-L-alanine (UMA). This is UDP-N-acetylmuramoylalanine--D-glutamate ligase from Trichlorobacter lovleyi (strain ATCC BAA-1151 / DSM 17278 / SZ) (Geobacter lovleyi).